We begin with the raw amino-acid sequence, 1856 residues long: Protein TANC1 (1856 aa).

Met1 is modified (N-acetylmethionine). Disordered regions lie at residues 1–45 (MLKA…LSTT), 58–130 (SMSL…SCSP), 203–222 (KSPCETISSPSSTLESKDSG), 262–296 (RADNCSPVAEEETTGSAESVLPKAEPSAGDGPVPY), and 437–489 (IASS…RPRE). Residues 8 to 21 (KSREGGKGSKKEAG) are compositionally biased toward basic and acidic residues. The span at 29-45 (PALSSSGDSPVNSLSTT) shows a compositional bias: polar residues. Ser60, Ser63, Ser64, Ser204, Ser267, and Ser462 each carry phosphoserine. A compositionally biased stretch (low complexity) spans 60-77 (SLPSSPLLPRQSLLTQSR). The span at 203 to 216 (KSPCETISSPSSTL) shows a compositional bias: polar residues. A compositionally biased stretch (low complexity) spans 439–475 (SSSPSLSPKSSDPTQDLPGTPLLSPSSSTSALSVTRT). 11 ANK repeats span residues 893-925 (EGLSAALASLRNLYTPNVKVSRLLILGGANVNY), 931-960 (NNAPILCVQSHLGHEEVVTLLLEFGACLDG), 964-993 (NGMNALCYAAAAGHMKLVCLLIKKGARVDH), 997-1026 (KGQCALVHSALRGHSDILQYLLNCEWSAGP), 1037-1066 (ALQQALTAAASMGHSSVVQSLLGMAEEHEI), 1075-1104 (WGETALTAAAGRGKVEICELLLERGAAVSR), 1108-1137 (RGVPPLFCAARQGHWQVVRLLLDRGCDVNL), 1141-1170 (QGRTPLMVASCEGHLSTVEFLLSKGAALSS), 1174-1203 (EGLSALSWACLKGHRAVVQYLVEEGAEIDQ), 1207-1236 (NGRTPLDLAAFYGDAETVLYLVEKGAVIEH), and 1240-1269 (SGMRPLDRAIGCRNTAVVVTLLRKGAKLGN). 3 TPR repeats span residues 1286–1319 (LQKLVEEGNVMYKKGKMKEAAQRYQYALRKFPRE), 1333–1366 (VSLYLNLSRCRRKTNDFGLAEEFASKALELKPKS), and 1368–1400 (EAFYARARAKRNSRQFLAALADLQEAVKLCPNN). Over residues 1417-1426 (LQRNQQQKQQ) the composition is skewed to low complexity. Disordered stretches follow at residues 1417–1597 (LQRN…FGDR), 1636–1720 (DMAP…NTPF), and 1832–1856 (HVSTEAHRSHLTSAKPKRSFIESNV). Phosphoserine occurs at positions 1436 and 1463. Positions 1454 to 1463 (EEAEEEDTSS) are enriched in acidic residues. Polar residues-rich tracts occupy residues 1490–1505 (EGLQSKGRSASPQSRA) and 1524–1556 (PTKQAQIVKTNQHLGSGQSSMRNSSTKIQVSSQ). The span at 1656 to 1686 (SLSSSGSSGSPSSSIKMSSSTSSLTSSSSVS) shows a compositional bias: low complexity. Phosphoserine occurs at positions 1665, 1673, and 1674.

Belongs to the TANC family. In terms of assembly, interacts probably directly with DLG1, DLG4, HOMER1. Interacts with DLGAP1, INA, CAMK2A, GRIN2B and GRIA1. Interacts with TNIK and MINK1. In terms of processing, phosphorylated; by MINK1 and TNIK upon stimulation by RAP2A.

Its subcellular location is the postsynaptic density. Its function is as follows. May be a scaffold component in the postsynaptic density. This is Protein TANC1 (Tanc1) from Mus musculus (Mouse).